The following is a 1368-amino-acid chain: DNA-directed RNA polymerase subunit beta (1368 aa).

The protein belongs to the RNA polymerase beta chain family. As to quaternary structure, the RNAP catalytic core consists of 2 alpha, 1 beta, 1 beta' and 1 omega subunit. When a sigma factor is associated with the core the holoenzyme is formed, which can initiate transcription.

The catalysed reaction is RNA(n) + a ribonucleoside 5'-triphosphate = RNA(n+1) + diphosphate. In terms of biological role, DNA-dependent RNA polymerase catalyzes the transcription of DNA into RNA using the four ribonucleoside triphosphates as substrates. The protein is DNA-directed RNA polymerase subunit beta of Burkholderia ambifaria (strain MC40-6).